A 368-amino-acid chain; its full sequence is Ribosomal RNA large subunit methyltransferase M (368 aa).

Residues serine 189, 222 to 225 (CPGG), aspartate 241, aspartate 261, and aspartate 278 each bind S-adenosyl-L-methionine. Catalysis depends on lysine 307, which acts as the Proton acceptor.

Belongs to the class I-like SAM-binding methyltransferase superfamily. RNA methyltransferase RlmE family. RlmM subfamily. Monomer.

Its subcellular location is the cytoplasm. The catalysed reaction is cytidine(2498) in 23S rRNA + S-adenosyl-L-methionine = 2'-O-methylcytidine(2498) in 23S rRNA + S-adenosyl-L-homocysteine + H(+). Functionally, catalyzes the 2'-O-methylation at nucleotide C2498 in 23S rRNA. In Yersinia pseudotuberculosis serotype O:1b (strain IP 31758), this protein is Ribosomal RNA large subunit methyltransferase M.